The chain runs to 362 residues: 5-amino-6-(D-ribitylamino)uracil--L-tyrosine 4-hydroxyphenyl transferase (362 aa).

The Radical SAM core domain occupies 48–294 (ITYVVNRNIN…GDTIKNIQVS (247 aa)). 3 residues coordinate [4Fe-4S] cluster: C62, C66, and C69.

The protein belongs to the radical SAM superfamily. CofH family. As to quaternary structure, consists of two subunits, CofG and CofH. Requires [4Fe-4S] cluster as cofactor.

It catalyses the reaction 5-amino-6-(D-ribitylamino)uracil + L-tyrosine + S-adenosyl-L-methionine = 5-amino-5-(4-hydroxybenzyl)-6-(D-ribitylimino)-5,6-dihydrouracil + 2-iminoacetate + 5'-deoxyadenosine + L-methionine + H(+). It functions in the pathway cofactor biosynthesis; coenzyme F0 biosynthesis. Functionally, catalyzes the radical-mediated synthesis of 5-amino-5-(4-hydroxybenzyl)-6-(D-ribitylimino)-5,6-dihydrouracil from 5-amino-6-(D-ribitylamino)uracil and L-tyrosine. The polypeptide is 5-amino-6-(D-ribitylamino)uracil--L-tyrosine 4-hydroxyphenyl transferase (Methanococcus aeolicus (strain ATCC BAA-1280 / DSM 17508 / OCM 812 / Nankai-3)).